Here is a 76-residue protein sequence, read N- to C-terminus: NADH-ubiquinone oxidoreductase chain 4L (76 aa).

3 helical membrane-spanning segments follow: residues 1–21 (MTPV…GLAF), 29–49 (ALLC…LWAL), and 56–76 (YSVA…AGLA).

The protein belongs to the complex I subunit 4L family.

It is found in the mitochondrion membrane. It carries out the reaction a ubiquinone + NADH + 5 H(+)(in) = a ubiquinol + NAD(+) + 4 H(+)(out). Functionally, core subunit of the mitochondrial membrane respiratory chain NADH dehydrogenase (Complex I) which catalyzes electron transfer from NADH through the respiratory chain, using ubiquinone as an electron acceptor. Part of the enzyme membrane arm which is embedded in the lipid bilayer and involved in proton translocation. The protein is NADH-ubiquinone oxidoreductase chain 4L (MT-ND4L) of Oncorhynchus masou (Cherry salmon).